The chain runs to 521 residues: Tigger transposable element-derived protein 6 (521 aa).

An HTH psq-type domain is found at Asn3 to Phe54. 2 consecutive DNA-binding regions (H-T-H motif) follow at residues Lys30–Asp50 and Ser99–Arg130. Positions Gln66–Ala137 constitute an HTH CENPB-type domain. The DDE-1 domain occupies Tyr170–Trp372.

It belongs to the tigger transposable element derived protein family.

Its subcellular location is the nucleus. The polypeptide is Tigger transposable element-derived protein 6 (TIGD6) (Homo sapiens (Human)).